A 342-amino-acid polypeptide reads, in one-letter code: MKIAVLLSGGVDSSYSAYNLKEQGHELVGIYLKLHASEKKHDLYIKNAQKACEFLGIPLEVLDFQKDFKSVVYDAFISAYEEGQTPNPCALCNPLMKFGLALDHALKLGCEKIATGHYARIEENDKVSYIREALDKTKDQSYFLYALEHEVIAKLVFPLGDLLKKDIKPLALNAMPFLGTLETYKESQEICFVEKSYIDTLKKHVEVEKEGVVKNLQGKIIGTHKGYMQYTIGKRKGFNIKGALEPHFVVRIDAKKNELVVGKKEDLATHFLKAKNKSLMKDFKSGEYFIKARYRSMPTKAFVSLKDEMIEVELKEPFYGVAKGQALVVYKDDIVLGGGVIV.

Residues 6-13 (LLSGGVDS) and Leu32 each bind ATP. Cys92 acts as the Nucleophile in catalysis. The cysteines at positions 92 and 191 are disulfide-linked. Gly116 contributes to the ATP binding site. Residues 138–140 (KDQ) are interaction with tRNA. Cys191 functions as the Cysteine persulfide intermediate in the catalytic mechanism. Residues 293-294 (RY) are interaction with tRNA.

The protein belongs to the MnmA/TRMU family.

It is found in the cytoplasm. It catalyses the reaction S-sulfanyl-L-cysteinyl-[protein] + uridine(34) in tRNA + AH2 + ATP = 2-thiouridine(34) in tRNA + L-cysteinyl-[protein] + A + AMP + diphosphate + H(+). Its function is as follows. Catalyzes the 2-thiolation of uridine at the wobble position (U34) of tRNA, leading to the formation of s(2)U34. This is tRNA-specific 2-thiouridylase MnmA from Helicobacter acinonychis (strain Sheeba).